Reading from the N-terminus, the 227-residue chain is Cytochrome c oxidase subunit 2 (227 aa).

Residues methionine 1–serine 14 lie on the Mitochondrial intermembrane side of the membrane. The chain crosses the membrane as a helical span at residues proline 15–methionine 45. The Mitochondrial matrix segment spans residues leucine 46–glutamine 59. The helical transmembrane segment at glutamate 60–methionine 87 threads the bilayer. The Mitochondrial intermembrane portion of the chain corresponds to aspartate 88–leucine 227. Positions 161, 196, 198, 200, 204, and 207 each coordinate Cu cation. Mg(2+) is bound at residue glutamate 198. Tyrosine 218 is modified (phosphotyrosine).

Belongs to the cytochrome c oxidase subunit 2 family. In terms of assembly, component of the cytochrome c oxidase (complex IV, CIV), a multisubunit enzyme composed of 14 subunits. The complex is composed of a catalytic core of 3 subunits MT-CO1, MT-CO2 and MT-CO3, encoded in the mitochondrial DNA, and 11 supernumerary subunits COX4I, COX5A, COX5B, COX6A, COX6B, COX6C, COX7A, COX7B, COX7C, COX8 and NDUFA4, which are encoded in the nuclear genome. The complex exists as a monomer or a dimer and forms supercomplexes (SCs) in the inner mitochondrial membrane with NADH-ubiquinone oxidoreductase (complex I, CI) and ubiquinol-cytochrome c oxidoreductase (cytochrome b-c1 complex, complex III, CIII), resulting in different assemblies (supercomplex SCI(1)III(2)IV(1) and megacomplex MCI(2)III(2)IV(2)). Found in a complex with TMEM177, COA6, COX18, COX20, SCO1 and SCO2. Interacts with TMEM177 in a COX20-dependent manner. Interacts with COX20. Interacts with COX16. Cu cation is required as a cofactor.

It localises to the mitochondrion inner membrane. It carries out the reaction 4 Fe(II)-[cytochrome c] + O2 + 8 H(+)(in) = 4 Fe(III)-[cytochrome c] + 2 H2O + 4 H(+)(out). Its function is as follows. Component of the cytochrome c oxidase, the last enzyme in the mitochondrial electron transport chain which drives oxidative phosphorylation. The respiratory chain contains 3 multisubunit complexes succinate dehydrogenase (complex II, CII), ubiquinol-cytochrome c oxidoreductase (cytochrome b-c1 complex, complex III, CIII) and cytochrome c oxidase (complex IV, CIV), that cooperate to transfer electrons derived from NADH and succinate to molecular oxygen, creating an electrochemical gradient over the inner membrane that drives transmembrane transport and the ATP synthase. Cytochrome c oxidase is the component of the respiratory chain that catalyzes the reduction of oxygen to water. Electrons originating from reduced cytochrome c in the intermembrane space (IMS) are transferred via the dinuclear copper A center (CU(A)) of subunit 2 and heme A of subunit 1 to the active site in subunit 1, a binuclear center (BNC) formed by heme A3 and copper B (CU(B)). The BNC reduces molecular oxygen to 2 water molecules using 4 electrons from cytochrome c in the IMS and 4 protons from the mitochondrial matrix. This chain is Cytochrome c oxidase subunit 2 (MT-CO2), found in Macrotus californicus (Californian leaf-nosed bat).